The sequence spans 91 residues: Acylphosphatase (91 aa).

One can recognise an Acylphosphatase-like domain in the interval 3-91; it reads KLRMNVQGRV…EETEQFKVIQ (89 aa). Residues arginine 18 and asparagine 36 contribute to the active site.

This sequence belongs to the acylphosphatase family.

The enzyme catalyses an acyl phosphate + H2O = a carboxylate + phosphate + H(+). This chain is Acylphosphatase (acyP), found in Enterococcus faecalis (strain ATCC 700802 / V583).